A 471-amino-acid chain; its full sequence is Light-independent protochlorophyllide reductase subunit N (471 aa).

[4Fe-4S] cluster is bound by residues Cys-22, Cys-47, and Cys-107.

Belongs to the BchN/ChlN family. In terms of assembly, protochlorophyllide reductase is composed of three subunits; ChlL, ChlN and ChlB. Forms a heterotetramer of two ChlB and two ChlN subunits. The cofactor is [4Fe-4S] cluster.

The protein localises to the plastid. The protein resides in the chloroplast. The catalysed reaction is chlorophyllide a + oxidized 2[4Fe-4S]-[ferredoxin] + 2 ADP + 2 phosphate = protochlorophyllide a + reduced 2[4Fe-4S]-[ferredoxin] + 2 ATP + 2 H2O. The protein operates within porphyrin-containing compound metabolism; chlorophyll biosynthesis (light-independent). Component of the dark-operative protochlorophyllide reductase (DPOR) that uses Mg-ATP and reduced ferredoxin to reduce ring D of protochlorophyllide (Pchlide) to form chlorophyllide a (Chlide). This reaction is light-independent. The NB-protein (ChlN-ChlB) is the catalytic component of the complex. The chain is Light-independent protochlorophyllide reductase subunit N from Huperzia lucidula (Shining clubmoss).